Reading from the N-terminus, the 348-residue chain is Trace amine-associated receptor 9 (348 aa).

Over 1 to 33 (MVNNFSQAEAVELCYKNVNESCIKTPYSPGPRS) the chain is Extracellular. Residues Asn4 and Asn19 are each glycosylated (N-linked (GlcNAc...) asparagine). 2 disulfides stabilise this stretch: Cys22–Cys186 and Cys105–Cys190. The helical transmembrane segment at 34–58 (ILYAVLGFGAVLAAFGNLLVMIAIL) threads the bilayer. The Cytoplasmic portion of the chain corresponds to 59 to 68 (HFKQLHTPTN). Residues 69–90 (FLIASLACADFLVGVTVMPFST) traverse the membrane as a helical segment. Residues 91–105 (VRSVESCWYFGDSYC) are Extracellular-facing. A helical transmembrane segment spans residues 106 to 128 (KFHTCFDTSFCFASLFHLCCISV). Residues Asp112 and Thr113 each coordinate spermidine. Topologically, residues 129–148 (DRYIAVTDPLTYPTKFTVSV) are cytoplasmic. Residues 149–170 (SGICIVLSWFFSVTYSFSIFYT) traverse the membrane as a helical segment. Over 171–196 (GANEEGIEELVVALTCVGGCQAPLNQ) the chain is Extracellular. The tract at residues 174 to 187 (EEGIEELVVALTCV) is extracellular Loop 2 (ECL2). Residues 197–218 (NWVLLCFLLFFIPNVAMVFIYS) form a helical membrane-spanning segment. Residues 219-256 (KIFLVAKHQARKIESTASQAQSSSESYKERVAKRERKA) lie on the Cytoplasmic side of the membrane. A helical transmembrane segment spans residues 257 to 280 (AKTLGIAMAAFLVSWLPYLVDAVI). Topologically, residues 281-293 (DAYMNFITPPYVY) are extracellular. A helical transmembrane segment spans residues 294–314 (EILVWCVYYNSAMNPLIYAFF). Residues 315–348 (YQWFGKAIKLIVSGKVLRTDSSTTNLFSEEVETD) lie on the Cytoplasmic side of the membrane.

The protein belongs to the G-protein coupled receptor 1 family.

Its subcellular location is the cell membrane. Olfactory receptor specific for trace amines, such as N,N-dimethylcyclohexylamine (DMCHA) and beta-phenylethylamine (beta-PEA). In contrast to mouse and rat orthologs, not activated by triethylamine, cadaverine (CAD) or spermidine. Trace amine compounds are enriched in animal body fluids and act on trace amine-associated receptors (TAARs) to elicit both intraspecific and interspecific innate behaviors. Trace amine-binding causes a conformation change that triggers signaling via G(s)-class of G alpha proteins (GNAL or GNAS). In mature olfactory sensory neurons, TAAR9 is coupled with GNAL/G(olf)G alpha protein and mediates activation of adenylate cyclase activity to activate cAMP signaling and eventually transmit odorant signals to achieve membrane depolarization. In immature olfactory sensory neurons, TAAR9 is coupled with GNAS/G(s) G alpha proteins. The chain is Trace amine-associated receptor 9 from Homo sapiens (Human).